Here is a 170-residue protein sequence, read N- to C-terminus: MKTQRDGPSLGRWSLVLLLLGLTMPLAVIARVLSYQEAVLRAVDVLNQRSSDANLYRLLNLDPRPTMDGDPDTPKPVSFTVKETVCPRTIQRSPEECDFKEDGLVKWCVGTVTLNQAKDSFDISCDKDKRKVAQLGDVLQKAGEKIVRGLKNIGQRIKDFFGKLTPRTES.

The signal sequence occupies residues 1-30 (MKTQRDGPSLGRWSLVLLLLGLTMPLAVIA). Positions 31–131 (RVLSYQEAVL…DISCDKDKRK (101 aa)) are cleaved as a propeptide — cathelin-like domain (CLD). Cystine bridges form between Cys86/Cys97 and Cys108/Cys125. The segment at 150–162 (LKNIGQRIKDFFG) is active core.

The protein belongs to the cathelicidin family. As to quaternary structure, monomer, homodimer or homotrimer (in vitro). Oligomerizes as tetra- or hexamer in solution (in vitro). Post-translationally, proteolytically cleaved by proteinase PRTN3 into antibacterial peptide LL-37. Proteolytically cleaved by cathepsin CTSG and neutrophil elastase ELANE. Resistant to proteolytic degradation in solution, and when bound to both zwitterionic (mimicking mammalian membranes) and negatively charged membranes (mimicking bacterial membranes). In terms of processing, after secretion onto the skin surface, the CAMP gene product is processed by a serine protease-dependent mechanism into multiple novel antimicrobial peptides distinct from and shorter than cathelicidin LL-37. These peptides show enhanced antimicrobial action, acquiring the ability to kill skin pathogens such as S.aureus, E.coli and C.albicans. These peptides have lost the ability to stimulate CXCL8/IL8 release from keratinocytes. The peptides act synergistically, killing bacteria at lower concentrations when present together, and maintain activity at increased salt condition.

Its subcellular location is the secreted. It localises to the vesicle. Its function is as follows. Antimicrobial protein that is an integral component of the innate immune system. Binds to bacterial lipopolysaccharides (LPS). Acts via neutrophil N-formyl peptide receptors to enhance the release of CXCL2. Postsecretory processing generates multiple cathelicidin antimicrobial peptides with various lengths which act as a topical antimicrobial defense in sweat on skin. The unprocessed precursor form, cathelicidin antimicrobial peptide, inhibits the growth of Gram-negative E.coli and E.aerogenes with efficiencies comparable to that of the mature peptide LL-37 (in vitro). Antimicrobial peptide that is an integral component of the innate immune system. Binds to bacterial lipopolysaccharides (LPS). Causes membrane permeabilization by forming transmembrane pores (in vitro). Causes lysis of E.coli. Exhibits antimicrobial activity against Gram-negative bacteria such as P.aeruginosa, S.typhimurium, E.aerogenes, E.coli and P.syringae, Gram-positive bacteria such as L.monocytogenes, S.epidermidis, S.pyogenes and S.aureus, as well as vancomycin-resistant enterococci (in vitro). Exhibits antimicrobial activity against methicillin-resistant S.aureus, P.mirabilis, and C.albicans in low-salt media, but not in media containing 100 mM NaCl (in vitro). Forms chiral supramolecular assemblies with quinolone signal (PQS) molecules of P.aeruginosa, which may lead to interference of bacterial quorum signaling and perturbance of bacterial biofilm formation. May form supramolecular fiber-like assemblies on bacterial membranes. Induces cytokine and chemokine producation as well as TNF/TNFA and CSF2/GMCSF production in normal human keratinocytes. Exhibits hemolytic activity against red blood cells. In terms of biological role, exhibits antimicrobial activity against E.coli and B.megaterium (in vitro). The chain is Cathelicidin antimicrobial peptide from Ateles fusciceps robustus (Colombian black-faced spider monkey).